The chain runs to 485 residues: MELFELTLHELHDKLAKREVSSVEATRALLARIEATDSRVNAYITVTPDEALAAAEAADRRIAAGGLTPLTGVPVALKDIFVTRGIRTTCGSKILGNFIPPYDGTVVAKLREAGAVIVGKLNQDEFAMGSSGESSAFGATKNPWNLACIPGGSSSGSAAAIAARSATATLGTDTGGSIRQPASHCGCVGLRPTYGRVSRYGVIAYASSLDQVGPVTRDVTDCALMLGAVAGHDPLDSTSIDLPVPDYAAALTGQVKGLRLGLPKEYYLEGLDPDVKRALDAAIETYRGLGAEFVEVSLPHTDYAVATYYLIATAEASSNLARYDGVRFGHRAAGAANLIDMFRRSRAEGFGAEVKRRIMIGTYALSSGYYDAYYLKAQKVRTLIMQDFMKAFEQVDALLTPVAPTPAFKIGEKVDDPLQMYLSDIFTIPVNLAGTCAISVPAGMSAAGLPIGLQLIGRPFGEETILRAAHAFEQATEWHRHTAQL.

Residues K78 and S153 each act as charge relay system in the active site. S177 (acyl-ester intermediate) is an active-site residue.

The protein belongs to the amidase family. GatA subfamily. As to quaternary structure, heterotrimer of A, B and C subunits.

It carries out the reaction L-glutamyl-tRNA(Gln) + L-glutamine + ATP + H2O = L-glutaminyl-tRNA(Gln) + L-glutamate + ADP + phosphate + H(+). Its function is as follows. Allows the formation of correctly charged Gln-tRNA(Gln) through the transamidation of misacylated Glu-tRNA(Gln) in organisms which lack glutaminyl-tRNA synthetase. The reaction takes place in the presence of glutamine and ATP through an activated gamma-phospho-Glu-tRNA(Gln). The polypeptide is Glutamyl-tRNA(Gln) amidotransferase subunit A (Geobacter sulfurreducens (strain ATCC 51573 / DSM 12127 / PCA)).